Consider the following 279-residue polypeptide: Probable diacylglycerol pyrophosphate phosphatase 1 (279 aa).

Topologically, residues 1–17 (MEAVGKHVKLFWNVYSD) are lumenal. A helical membrane pass occupies residues 18–38 (YAVLIAISLSYFVFDVLMLPF). The Cytoplasmic portion of the chain corresponds to 39–58 (TRQFSLEDITISHPFALHEQ). Residues 59–79 (VPTKYLGIICVFFPALVLYGF) traverse the membrane as a helical segment. At 80–86 (GKLRNNS) the chain is on the lumenal side. A helical transmembrane segment spans residues 87–107 (LLFWKSLMGLLYSTMVCGLCV). The Cytoplasmic segment spans residues 108-163 (SLLKNAVGRPRPDFLARCQPFESTPKTGLVDVLSCSVPWSDKVLQDGFRSFPSGHT). Positions 111-119 (KNAVGRPRP) are phosphatase sequence motif I. The segment at 159 to 162 (PSGH) is phosphatase sequence motif II. The chain crosses the membrane as a helical span at residues 164–184 (SFSFAGLGFLAIFLAGQLKMF). The Lumenal segment spans residues 185–187 (RNK). The helical transmembrane segment at 188-208 (TSSWKVVVPLVPLSIASWIGL) threads the bilayer. The Cytoplasmic segment spans residues 209-220 (SRSQDYRHHKED). The segment at 209-220 (SRSQDYRHHKED) is phosphatase sequence motif III. A helical membrane pass occupies residues 221–241 (IAVGALFGFAIAYVVYRQLFP). At 242–279 (PLDHHNADILYVQAELDEGYTNVHSAGNSSATNAEQMV) the chain is on the lumenal side.

It belongs to the PA-phosphatase related phosphoesterase family.

Its subcellular location is the vacuole membrane. The protein localises to the endoplasmic reticulum membrane. It catalyses the reaction a 1,2-diacyl-sn-glycerol 3-diphosphate + H2O = a 1,2-diacyl-sn-glycero-3-phosphate + phosphate + H(+). The enzyme catalyses a 1,2-diacyl-sn-glycero-3-phosphate + H2O = a 1,2-diacyl-sn-glycerol + phosphate. Functionally, catalyzes the dephosphorylation of diacylglycerol phosphate (DGPP) to phosphatidate (PA) and the subsequent dephosphorylation of PA to diacylglycerol (DAG). The chain is Probable diacylglycerol pyrophosphate phosphatase 1 (dpp1) from Schizosaccharomyces pombe (strain 972 / ATCC 24843) (Fission yeast).